A 203-amino-acid polypeptide reads, in one-letter code: Small ribosomal subunit protein uS4 (203 aa).

The S4 RNA-binding domain occupies 93 to 156; that stretch reads RRLDNVVYRL…MKVPAILEAV (64 aa).

The protein belongs to the universal ribosomal protein uS4 family. As to quaternary structure, part of the 30S ribosomal subunit. Contacts protein S5. The interaction surface between S4 and S5 is involved in control of translational fidelity.

In terms of biological role, one of the primary rRNA binding proteins, it binds directly to 16S rRNA where it nucleates assembly of the body of the 30S subunit. Its function is as follows. With S5 and S12 plays an important role in translational accuracy. The chain is Small ribosomal subunit protein uS4 from Streptococcus uberis (strain ATCC BAA-854 / 0140J).